The chain runs to 166 residues: Crossover junction endodeoxyribonuclease RuvC (166 aa).

Catalysis depends on residues D11, E71, and D142. Mg(2+)-binding residues include D11, E71, and D142.

This sequence belongs to the RuvC family. As to quaternary structure, homodimer which binds Holliday junction (HJ) DNA. The HJ becomes 2-fold symmetrical on binding to RuvC with unstacked arms; it has a different conformation from HJ DNA in complex with RuvA. In the full resolvosome a probable DNA-RuvA(4)-RuvB(12)-RuvC(2) complex forms which resolves the HJ. The cofactor is Mg(2+).

The protein localises to the cytoplasm. The enzyme catalyses Endonucleolytic cleavage at a junction such as a reciprocal single-stranded crossover between two homologous DNA duplexes (Holliday junction).. Its function is as follows. The RuvA-RuvB-RuvC complex processes Holliday junction (HJ) DNA during genetic recombination and DNA repair. Endonuclease that resolves HJ intermediates. Cleaves cruciform DNA by making single-stranded nicks across the HJ at symmetrical positions within the homologous arms, yielding a 5'-phosphate and a 3'-hydroxyl group; requires a central core of homology in the junction. The consensus cleavage sequence is 5'-(A/T)TT(C/G)-3'. Cleavage occurs on the 3'-side of the TT dinucleotide at the point of strand exchange. HJ branch migration catalyzed by RuvA-RuvB allows RuvC to scan DNA until it finds its consensus sequence, where it cleaves and resolves the cruciform DNA. This is Crossover junction endodeoxyribonuclease RuvC from Maricaulis maris (strain MCS10) (Caulobacter maris).